The sequence spans 495 residues: Probable cobyric acid synthase (495 aa).

The region spanning 256 to 441 (DVDIAVIRLT…LHGLFDNVNI (186 aa)) is the GATase cobBQ-type domain. Residue cysteine 334 is the Nucleophile of the active site. The active site involves histidine 433.

Belongs to the CobB/CobQ family. CobQ subfamily.

The protein operates within cofactor biosynthesis; adenosylcobalamin biosynthesis. In terms of biological role, catalyzes amidations at positions B, D, E, and G on adenosylcobyrinic A,C-diamide. NH(2) groups are provided by glutamine, and one molecule of ATP is hydrogenolyzed for each amidation. The sequence is that of Probable cobyric acid synthase from Methanococcoides burtonii (strain DSM 6242 / NBRC 107633 / OCM 468 / ACE-M).